Reading from the N-terminus, the 401-residue chain is Phosrestin-1 (401 aa).

Belongs to the arrestin family.

Functionally, directly interacts with light-activated rhodopsin thereby activating the phosphorylation of metarhodopsin. Inhibits the dephosphorylation of metarhodopsin. The chain is Phosrestin-1 (ARR2) from Calliphora vicina (Blue blowfly).